The sequence spans 138 residues: UPF0310 protein MAV_1800 (138 aa).

This sequence belongs to the UPF0310 family.

The polypeptide is UPF0310 protein MAV_1800 (Mycobacterium avium (strain 104)).